Consider the following 192-residue polypeptide: Zinc finger CCHC domain-containing protein 10 (192 aa).

Residues 43-60 (VRCQKCLEFGHWTYECTG) form a CCHC-type zinc finger. Residues 89 to 192 (QSIGETNVER…DEPPKKKKKK (104 aa)) are disordered. Low complexity-rich tracts occupy residues 109–136 (TSSSSSSSDSSASDSSSESEETSTSSSS) and 144–179 (SSSSSSSSASSTTSSSSSDSDSDSSSSSSSSTSTDS).

The polypeptide is Zinc finger CCHC domain-containing protein 10 (ZCCHC10) (Homo sapiens (Human)).